The primary structure comprises 58 residues: MKTIKVTQIKSASHRLKNHKLCLQGLGLRRIGHTVEVQDTPSNRGMINKVYYMVSVEE.

This sequence belongs to the universal ribosomal protein uL30 family. In terms of assembly, part of the 50S ribosomal subunit.

The polypeptide is Large ribosomal subunit protein uL30 (Acinetobacter baylyi (strain ATCC 33305 / BD413 / ADP1)).